The primary structure comprises 1037 residues: Sentrin-specific protease 7 (1037 aa).

Basic residues predominate over residues 1 to 10 (MDRARPGRRR). Disordered regions lie at residues 1–27 (MDRA…SSPA) and 185–399 (SDTA…ENSS). Residues serine 12, serine 13, and serine 25 each carry the phosphoserine modification. Low complexity predominate over residues 192–208 (SEQLSSSSDGSLESCQS). A compositionally biased stretch (polar residues) spans 272–282 (GTSNKNTSYSY). Basic residues predominate over residues 290–300 (VSRKRKKRGRS). Composition is skewed to basic and acidic residues over residues 301–321 (NFHD…HTKE) and 328–341 (VSRK…DSHQ). The segment covering 379 to 399 (ASSPNKSLESSASSEVSENSS) has biased composition (low complexity). 2 positions are modified to phosphoserine: serine 434 and serine 435. A protease region spans residues 747–1037 (LGVTNEDLEC…HLQQQKGGSC (291 aa)). Residue histidine 847 is part of the active site. A disordered region spans residues 873 to 909 (QFQGQQSQHDHKMTDNDPHTTSTVSTSAEDSQSTEVN). Residues 880–890 (QHDHKMTDNDP) show a composition bias toward basic and acidic residues. Residues 891-909 (HTTSTVSTSAEDSQSTEVN) are compositionally biased toward polar residues. The active site involves aspartate 926. Cysteine 979 acts as the Nucleophile in catalysis.

It belongs to the peptidase C48 family.

The protein resides in the cytoplasm. Functionally, protease that acts as a positive regulator of the cGAS-STING pathway by catalyzing desumoylation of CGAS. Desumoylation of CGAS promotes DNA-binding activity of CGAS, subsequent oligomerization and activation. Deconjugates SUMO2 and SUMO3 from targeted proteins, but not SUMO1. Catalyzes the deconjugation of poly-SUMO2 and poly-SUMO3 chains. Has very low efficiency in processing full-length SUMO proteins to their mature forms. This chain is Sentrin-specific protease 7, found in Mus musculus (Mouse).